The following is a 477-amino-acid chain: Endoglucanase A (477 aa).

A signal peptide spans 1–32; the sequence is MKNVKKRVGVVLLILAVLGVYMLAMPANTVSA. The active-site Proton donor is Glu-95. The Nucleophile role is filled by Asp-152. The 67-residue stretch at 411-477 folds into the Dockerin domain; it reads PQVVYGDVNG…LIKSIPHLPY (67 aa).

Belongs to the glycosyl hydrolase 8 (cellulase D) family.

The catalysed reaction is Endohydrolysis of (1-&gt;4)-beta-D-glucosidic linkages in cellulose, lichenin and cereal beta-D-glucans.. In terms of biological role, this enzyme catalyzes the endohydrolysis of 1,4-beta-glucosidic linkages in cellulose, lichenin and cereal beta-D-glucans. This chain is Endoglucanase A (celA), found in Acetivibrio thermocellus (strain ATCC 27405 / DSM 1237 / JCM 9322 / NBRC 103400 / NCIMB 10682 / NRRL B-4536 / VPI 7372) (Clostridium thermocellum).